The following is a 112-amino-acid chain: MPVQGRENMDPKSPGYLALIAQRESLDAQIIAARKAEREVAIGQIKALMKEFDLSVLDLQERVQKRNSKRMSTVPKYRDPATGKTWSGRGRQPAWLGNDPAAFLIQPDLPAI.

Residues lysine 65–glutamine 92 are disordered. DNA-binding regions lie at residues arginine 89 to alanine 94 and arginine 89 to tryptophan 95.

Belongs to the histone-like protein H-NS family. In terms of assembly, homodimer that oligomerizes on DNA into higher-order complexes that form bridges between disparate regions of DNA compacting it.

The protein resides in the cytoplasm. It localises to the nucleoid. Its function is as follows. A DNA-binding protein implicated in transcriptional repression and chromosome organization and compaction. Binds in the minor groove of AT-rich DNA. Binds nucleation sites in AT-rich DNA and bridges them, forming higher-order nucleoprotein complexes and condensing the chromosome. As many horizontally transferred genes are AT-rich, it plays a central role in silencing foreign genes. This is DNA-binding protein Bv3F from Burkholderia vietnamiensis (strain G4 / LMG 22486) (Burkholderia cepacia (strain R1808)).